A 372-amino-acid chain; its full sequence is O-glycoside alpha-1,2-mannosyltransferase homolog 2 (372 aa).

The Cytoplasmic portion of the chain corresponds to 1–6 (MRISRL). A helical; Signal-anchor for type II membrane protein membrane pass occupies residues 7–27 (LIRVLLGFVILFITYILFPSI). Over 28 to 372 (PKALVNTLNV…NLTNEDYDEL (345 aa)) the chain is Lumenal. The Nucleophile role is filled by Glu271.

The protein belongs to the glycosyltransferase 15 family.

The protein localises to the endoplasmic reticulum membrane. Probable mannosyltransferase involved in O-glycosylation of cell wall and secreted proteins. The protein is O-glycoside alpha-1,2-mannosyltransferase homolog 2 (omh2) of Schizosaccharomyces pombe (strain 972 / ATCC 24843) (Fission yeast).